A 111-amino-acid chain; its full sequence is WAP four-disulfide core domain protein 12 (111 aa).

Residues 1–23 form the signal peptide; that stretch reads MGSSSFLVLMVSLALVTLVVVEG. The WAP domain maps to 27–74; it reads GIEKAGVCPADNVRCFKSNPPQCHTDQDCLGERKCCYLHCGFKCVIPV. Intrachain disulfides connect C34–C62, C41–C66, C49–C61, and C55–C70. The tract at residues 80-111 is disordered; that stretch reads GGNKDEDVSGPHPEPGWEAKSPGSSSTGCPQI. Polar residues predominate over residues 101-111; sequence PGSSSTGCPQI.

It localises to the secreted. Antibacterial protein. Putative acid-stable proteinase inhibitor. This Colobus guereza (Mantled guereza) protein is WAP four-disulfide core domain protein 12 (WFDC12).